The sequence spans 397 residues: Succinate--CoA ligase [ADP-forming] subunit beta (397 aa).

In terms of domain architecture, ATP-grasp spans 9 to 254; that stretch reads KALLRSYGAP…ETEEDPKELA (246 aa). Residues lysine 46, 53 to 55, glutamate 109, serine 112, and glutamate 117 each bind ATP; that span reads GRG. The Mg(2+) site is built by asparagine 209 and aspartate 223. Residues asparagine 274 and 331-333 each bind substrate; that span reads GIM.

The protein belongs to the succinate/malate CoA ligase beta subunit family. Heterotetramer of two alpha and two beta subunits. The cofactor is Mg(2+).

The enzyme catalyses succinate + ATP + CoA = succinyl-CoA + ADP + phosphate. It catalyses the reaction GTP + succinate + CoA = succinyl-CoA + GDP + phosphate. Its pathway is carbohydrate metabolism; tricarboxylic acid cycle; succinate from succinyl-CoA (ligase route): step 1/1. Its function is as follows. Succinyl-CoA synthetase functions in the citric acid cycle (TCA), coupling the hydrolysis of succinyl-CoA to the synthesis of either ATP or GTP and thus represents the only step of substrate-level phosphorylation in the TCA. The beta subunit provides nucleotide specificity of the enzyme and binds the substrate succinate, while the binding sites for coenzyme A and phosphate are found in the alpha subunit. The polypeptide is Succinate--CoA ligase [ADP-forming] subunit beta (Cereibacter sphaeroides (strain ATCC 17025 / ATH 2.4.3) (Rhodobacter sphaeroides)).